The following is a 74-amino-acid chain: ERTHTGEKPFECPECHKRFTRDHHLKTHMRLHTGEKPYHCSHCDRQFVQVANLRRHLRVHTGERPYACELCDAR.

C2H2-type zinc fingers lie at residues 1-4 (ERTH), 10-32 (FECP…MRLH), 38-60 (YHCS…LRVH), and 66-74 (YACELCDAR).

This sequence belongs to the krueppel C2H2-type zinc-finger protein family.

The protein localises to the nucleus. Krueppel is a gap class segmentation protein. In Psychoda cinerea (Psychod fly), this protein is Protein krueppel (Kr).